Here is a 419-residue protein sequence, read N- to C-terminus: UDP-N-acetylglucosamine 1-carboxyvinyltransferase (419 aa).

Residue 22-23 participates in phosphoenolpyruvate binding; that stretch reads KN. Residue arginine 95 coordinates UDP-N-acetyl-alpha-D-glucosamine. The Proton donor role is filled by cysteine 119. 2-(S-cysteinyl)pyruvic acid O-phosphothioketal is present on cysteine 119. UDP-N-acetyl-alpha-D-glucosamine-binding positions include 164-167, aspartate 308, and isoleucine 330; that span reads KVSV.

The protein belongs to the EPSP synthase family. MurA subfamily.

Its subcellular location is the cytoplasm. The catalysed reaction is phosphoenolpyruvate + UDP-N-acetyl-alpha-D-glucosamine = UDP-N-acetyl-3-O-(1-carboxyvinyl)-alpha-D-glucosamine + phosphate. The protein operates within cell wall biogenesis; peptidoglycan biosynthesis. Cell wall formation. Adds enolpyruvyl to UDP-N-acetylglucosamine. The protein is UDP-N-acetylglucosamine 1-carboxyvinyltransferase of Rickettsia felis (strain ATCC VR-1525 / URRWXCal2) (Rickettsia azadi).